The following is a 229-amino-acid chain: Uracil-DNA glycosylase (229 aa).

Residue D67 is the Proton acceptor of the active site.

This sequence belongs to the uracil-DNA glycosylase (UDG) superfamily. UNG family.

The protein resides in the cytoplasm. It carries out the reaction Hydrolyzes single-stranded DNA or mismatched double-stranded DNA and polynucleotides, releasing free uracil.. Functionally, excises uracil residues from the DNA which can arise as a result of misincorporation of dUMP residues by DNA polymerase or due to deamination of cytosine. The protein is Uracil-DNA glycosylase of Coxiella burnetii (strain CbuG_Q212) (Coxiella burnetii (strain Q212)).